Reading from the N-terminus, the 410-residue chain is Translation initiation factor 2 subunit gamma (410 aa).

The tr-type G domain maps to 6-203 (QSEVNIGMVG…AIQEFIPTPK (198 aa)). Residues 15 to 22 (GHVDHGKT) form a G1 region. D18, T22, G43, and S45 together coordinate Mg(2+). Residue 18–23 (DHGKTS) participates in GTP binding. Positions 43-47 (GISIR) are G2. Residues C58, C61, C73, and C76 each contribute to the Zn(2+) site. Residues 90–93 (DAPG) form a G3 region. GTP-binding positions include 146–149 (NKID) and 181–183 (SAH). A G4 region spans residues 146-149 (NKID). The tract at residues 181 to 183 (SAH) is G5.

This sequence belongs to the TRAFAC class translation factor GTPase superfamily. Classic translation factor GTPase family. EIF2G subfamily. As to quaternary structure, heterotrimer composed of an alpha, a beta and a gamma chain. Requires Mg(2+) as cofactor.

The enzyme catalyses GTP + H2O = GDP + phosphate + H(+). Its function is as follows. eIF-2 functions in the early steps of protein synthesis by forming a ternary complex with GTP and initiator tRNA. The polypeptide is Translation initiation factor 2 subunit gamma (Methanococcus maripaludis (strain C6 / ATCC BAA-1332)).